The primary structure comprises 308 residues: Porphobilinogen deaminase (308 aa).

At Cys-240 the chain carries S-(dipyrrolylmethanemethyl)cysteine.

Belongs to the HMBS family. As to quaternary structure, monomer. Dipyrromethane is required as a cofactor.

It catalyses the reaction 4 porphobilinogen + H2O = hydroxymethylbilane + 4 NH4(+). Its pathway is porphyrin-containing compound metabolism; protoporphyrin-IX biosynthesis; coproporphyrinogen-III from 5-aminolevulinate: step 2/4. Its function is as follows. Tetrapolymerization of the monopyrrole PBG into the hydroxymethylbilane pre-uroporphyrinogen in several discrete steps. The chain is Porphobilinogen deaminase from Desulfitobacterium hafniense (strain DSM 10664 / DCB-2).